The chain runs to 599 residues: MKNIRNFSIIAHIDHGKSTLSDRIIQICGGLSDREMEAQVLDSMDLERERGITIKAQSVTLDFKASDGETYQLNFIDTPGHVDFSYEVSRSLAACEGALLVVDAGQGVEAQTLANCYTAMEMDLEVVPVLNKIDLPAADPERVAEEIEDIVGIDATDAVRCSAKTGVGVTDVLERLVRDIPPPQGDPDGPLQALIIDSWFDNYLGVVSLVRIKNGTMRKGDKIKVMSTGQTYNADRLGIFTPKQVDRSELKCGEVGWLVCAIKDILGAPVGDTLTSARNPAEKALPGFKKVKPQVYAGLFPVSSDDYESFRDALGKLSLNDASLFYEPESSSALGFGFRCGFLGLLHMEIIQERLEREYDLDLITTAPTVVYEVETTAKETIYVDSPSKLPPLNNIYELREPIAECHMLLPQAYLGNVITLCIEKRGVQTNMVYHGNQVALTYEIPMAEVVLDFFDRLKSTSRGYASLDYNFKRFQASDMVRVDVLINNERVDALALITHRDNSQSRGRELVEKMKDLIPRQQFDIAIQAAIGTHIIARSTVKQLRKNVLAKCYGGDISRKKKLLQKQKEGKKRMKQIGNVELPQEAFLAILHVGKDNK.

In terms of domain architecture, tr-type G spans 2-184 (KNIRNFSIIA…RLVRDIPPPQ (183 aa)). GTP contacts are provided by residues 14 to 19 (DHGKST) and 131 to 134 (NKID).

Belongs to the TRAFAC class translation factor GTPase superfamily. Classic translation factor GTPase family. LepA subfamily.

The protein localises to the cell inner membrane. It catalyses the reaction GTP + H2O = GDP + phosphate + H(+). Required for accurate and efficient protein synthesis under certain stress conditions. May act as a fidelity factor of the translation reaction, by catalyzing a one-codon backward translocation of tRNAs on improperly translocated ribosomes. Back-translocation proceeds from a post-translocation (POST) complex to a pre-translocation (PRE) complex, thus giving elongation factor G a second chance to translocate the tRNAs correctly. Binds to ribosomes in a GTP-dependent manner. The sequence is that of Elongation factor 4 from Salmonella paratyphi C (strain RKS4594).